Reading from the N-terminus, the 638-residue chain is Probable potassium transport system protein Kup (638 aa).

12 helical membrane passes run 25 to 45, 65 to 85, 114 to 134, 152 to 172, 184 to 204, 226 to 246, 262 to 282, 291 to 311, 352 to 372, 382 to 402, 410 to 430, and 434 to 454; these read LAIAAIGVVFGDIGTSPLYSL, VISLLFWAIILVVGIKYLLFV, AGALMALGIFGACMFYGDAVI, PHLSHLVLPITIVILIALFWI, FGPIMVLWFVAIAALGVYHIV, LLQAYVVLGSVVLVLTGAEAL, AYGLVMPSLVLNYFGQGALLI, PFFLLAPEWGLLPLVILSTVA, IYVPVVNWLLLFVILCIVIGF, YGIAVTATMVITTVLAAVVMV, LLVGAIIAVFLAVDLGFFGAN, and VAQGGWLPLGIGALLFFLLMT.

The protein belongs to the HAK/KUP transporter (TC 2.A.72) family.

It localises to the cell inner membrane. It catalyses the reaction K(+)(in) + H(+)(in) = K(+)(out) + H(+)(out). Its function is as follows. Transport of potassium into the cell. Likely operates as a K(+):H(+) symporter. In Burkholderia lata (strain ATCC 17760 / DSM 23089 / LMG 22485 / NCIMB 9086 / R18194 / 383), this protein is Probable potassium transport system protein Kup.